Consider the following 350-residue polypeptide: 2-oxoisovalerate dehydrogenase subunit beta (350 aa).

In terms of assembly, heterodimer of an alpha and a beta chain. It depends on thiamine diphosphate as a cofactor.

The catalysed reaction is N(6)-[(R)-lipoyl]-L-lysyl-[protein] + 3-methyl-2-oxobutanoate + H(+) = N(6)-[(R)-S(8)-2-methylpropanoyldihydrolipoyl]-L-lysyl-[protein] + CO2. Functionally, the branched-chain alpha-keto dehydrogenase complex catalyzes the overall conversion of alpha-keto acids to acyl-CoA and CO(2). It contains multiple copies of three enzymatic components: branched-chain alpha-keto acid decarboxylase (E1), lipoamide acyltransferase (E2) and lipoamide dehydrogenase (E3). The chain is 2-oxoisovalerate dehydrogenase subunit beta (bkdA2) from Pseudomonas aeruginosa (strain ATCC 15692 / DSM 22644 / CIP 104116 / JCM 14847 / LMG 12228 / 1C / PRS 101 / PAO1).